A 107-amino-acid chain; its full sequence is Nucleoid-associated protein Mlg_1509 (107 aa).

The protein belongs to the YbaB/EbfC family. Homodimer.

Its subcellular location is the cytoplasm. It is found in the nucleoid. In terms of biological role, binds to DNA and alters its conformation. May be involved in regulation of gene expression, nucleoid organization and DNA protection. The protein is Nucleoid-associated protein Mlg_1509 of Alkalilimnicola ehrlichii (strain ATCC BAA-1101 / DSM 17681 / MLHE-1).